The primary structure comprises 669 residues: Pre-mRNA-processing factor 39 (669 aa).

Residues methionine 1–arginine 10 are compositionally biased toward basic and acidic residues. Residues methionine 1–valine 23 are disordered. Residues asparagine 11–valine 23 show a composition bias toward low complexity. The residue at position 44 (serine 44) is a Phosphoserine. HAT repeat units lie at residues asparagine 109 to arginine 141, aspartate 143 to glutamate 175, glutamate 183 to glutamate 218, glycine 220 to asparagine 253, threonine 333 to glutamate 365, glycine 367 to asparagine 399, and glycine 404 to asparagine 436. Over residues lysine 599–aspartate 624 the composition is skewed to basic and acidic residues. The tract at residues lysine 599 to aspartate 634 is disordered. Over residues threonine 625–aspartate 634 the composition is skewed to polar residues.

It belongs to the PRP39 family.

Its subcellular location is the nucleus. Functionally, involved in pre-mRNA splicing. The chain is Pre-mRNA-processing factor 39 (PRPF39) from Homo sapiens (Human).